A 366-amino-acid chain; its full sequence is IgG receptor FcRn large subunit p51 (366 aa).

The first 22 residues, 1–22 (MGMSQPGVLLSLLLVLLPQTWG), serve as a signal peptide directing secretion. The segment at 23 to 111 (AEPRLPLMYH…RTLENQINGT (89 aa)) is alpha-1. Topologically, residues 23–298 (AEPRLPLMYH…VDLDSPARSS (276 aa)) are extracellular. N-linked (GlcNAc...) asparagine glycans are attached at residues Asn-109, Asn-126, Asn-150, and Asn-247. The alpha-2 stretch occupies residues 112–201 (FTLQGLLGCE…ERGRQNLEWK (90 aa)). Intrachain disulfides connect Cys-120–Cys-183 and Cys-222–Cys-276. Residues 202–291 (EPPSMRLKAR…GLAQPLTVDL (90 aa)) form an alpha-3 region. The Ig-like C1-type domain occupies 203 to 290 (PPSMRLKARP…EGLAQPLTVD (88 aa)). Residues 293-298 (SPARSS) form a connecting peptide region. The chain crosses the membrane as a helical span at residues 299 to 322 (VPVVGIILGLLLVVVAIAGGVLLW). Residues 323 to 366 (NRMRSGLPAPWLSLSGDDSGDLLPGGNLPPEAEPQGVNAFPATS) lie on the Cytoplasmic side of the membrane. The residue at position 335 (Ser-335) is a Phosphoserine. Residues 344 to 366 (LLPGGNLPPEAEPQGVNAFPATS) form a disordered region.

The protein belongs to the immunoglobulin superfamily. In terms of assembly, fcRn complex consists of two subunits: p51, and p14 which is equivalent to beta-2-microglobulin. It forms an MHC class I-like heterodimer. Interacts with albumin/ALB; this interaction regulates ALB homeostasis. Intestinal epithelium.

It is found in the cell membrane. It localises to the endosome membrane. In terms of biological role, cell surface receptor that transfers passive humoral immunity from the mother to the newborn. Binds to the Fc region of monomeric immunoglobulin gamma and mediates its selective uptake from milk. IgG in the milk is bound at the apical surface of the intestinal epithelium. The resultant FcRn-IgG complexes are transcytosed across the intestinal epithelium and IgG is released from FcRn into blood or tissue fluids. Throughout life, contributes to effective humoral immunity by recycling IgG and extending its half-life in the circulation. Mechanistically, monomeric IgG binding to FcRn in acidic endosomes of endothelial and hematopoietic cells recycles IgG to the cell surface where it is released into the circulation. In addition of IgG, regulates homeostasis of the other most abundant circulating protein albumin/ALB. This Rattus norvegicus (Rat) protein is IgG receptor FcRn large subunit p51 (Fcgrt).